Here is a 494-residue protein sequence, read N- to C-terminus: Alpha-amylase (494 aa).

Positions 1 to 26 are cleaved as a signal peptide; sequence MQISKAALLASLAALVYAQPVTLFKR. Cys57 and Cys65 are joined by a disulfide. A substrate-binding site is contributed by Trp110. Asn148 is a binding site for Ca(2+). His149 serves as a coordination point for substrate. An intrachain disulfide couples Cys177 to Cys191. Ca(2+) is bound at residue Asp202. Asn224 carries N-linked (GlcNAc...) asparagine glycosylation. Arg231 contributes to the substrate binding site. Positions 233, 237, and 257 each coordinate Ca(2+). Residue Asp233 is the Nucleophile of the active site. A substrate-binding site is contributed by 236–237; the sequence is KH. Glu257 functions as the Proton donor in the catalytic mechanism. Gly261 is a binding site for substrate. Cys267 and Cys310 are joined by a disulfide. Asp324 and Arg371 together coordinate substrate. The cysteines at positions 462 and 493 are disulfide-linked.

This sequence belongs to the glycosyl hydrolase 13 family. The cofactor is Ca(2+).

The protein localises to the secreted. The catalysed reaction is Endohydrolysis of (1-&gt;4)-alpha-D-glucosidic linkages in polysaccharides containing three or more (1-&gt;4)-alpha-linked D-glucose units.. The polypeptide is Alpha-amylase (ALP1) (Saccharomycopsis fibuligera (Yeast)).